The following is a 144-amino-acid chain: Putative pre-16S rRNA nuclease (144 aa).

This sequence belongs to the YqgF nuclease family.

The protein resides in the cytoplasm. Functionally, could be a nuclease involved in processing of the 5'-end of pre-16S rRNA. In Mycoplasma mobile (strain ATCC 43663 / 163K / NCTC 11711) (Mesomycoplasma mobile), this protein is Putative pre-16S rRNA nuclease.